Reading from the N-terminus, the 398-residue chain is Autophagy-related protein 39 (398 aa).

The ATG8-binding signature appears at 8 to 11 (WNLV). Residues 15–50 (RLRKGREGEEQSSKSEISLDSLHESSFAGEDDEDFD) form a disordered region. Residues 52 to 59 (DVLSNTSS) carry the ATG11-binding motif. The helical transmembrane segment at 148–164 (VIMLSSLLSMTFSYLAL) threads the bilayer.

In terms of assembly, interacts with ATG8 and ATG11.

It is found in the endoplasmic reticulum membrane. It localises to the preautophagosomal structure membrane. In terms of biological role, acts as a receptor for reticulophagy and nucleophagy. Directs autophagic sequestration of double-membrane vesicles derived from the nuclear envelope and perinuclear endoplasmic reticulum (pnER) into autophagosomes. Is not required for the cytoplasm-to-vacuole targeting pathway, mitophagy, pexophagy, and non-selective autophagy. The sequence is that of Autophagy-related protein 39 from Saccharomyces cerevisiae (strain ATCC 204508 / S288c) (Baker's yeast).